The following is a 117-amino-acid chain: Mediator of RNA polymerase II transcription subunit 11 (117 aa).

N-acetylalanine is present on A2.

It belongs to the Mediator complex subunit 11 family. Component of the Mediator complex, which is composed of MED1, MED4, MED6, MED7, MED8, MED9, MED10, MED11, MED12, MED13, MED13L, MED14, MED15, MED16, MED17, MED18, MED19, MED20, MED21, MED22, MED23, MED24, MED25, MED26, MED27, MED29, MED30, MED31, CCNC, CDK8 and CDC2L6/CDK11. The MED12, MED13, CCNC and CDK8 subunits form a distinct module termed the CDK8 module. Mediator containing the CDK8 module is less active than Mediator lacking this module in supporting transcriptional activation. Individual preparations of the Mediator complex lacking one or more distinct subunits have been variously termed ARC, CRSP, DRIP, PC2, SMCC and TRAP. As to expression, expressed in cochlea.

The protein localises to the nucleus. In terms of biological role, component of the Mediator complex, a coactivator involved in the regulated transcription of nearly all RNA polymerase II-dependent genes. Mediator functions as a bridge to convey information from gene-specific regulatory proteins to the basal RNA polymerase II transcription machinery. Mediator is recruited to promoters by direct interactions with regulatory proteins and serves as a scaffold for the assembly of a functional pre-initiation complex with RNA polymerase II and the general transcription factors. The polypeptide is Mediator of RNA polymerase II transcription subunit 11 (Med11) (Mus musculus (Mouse)).